An 865-amino-acid chain; its full sequence is Protein translocase subunit SecA (865 aa).

ATP-binding positions include Gln93, 111–115 (GEGKT), and Asp501. Zn(2+)-binding residues include Cys841, Cys843, Cys852, and Cys853.

Belongs to the SecA family. In terms of assembly, monomer and homodimer. Part of the essential Sec protein translocation apparatus which comprises SecA, SecYEG and auxiliary proteins SecDF-YajC and YidC. Zn(2+) is required as a cofactor.

It localises to the cell inner membrane. Its subcellular location is the cytoplasm. It carries out the reaction ATP + H2O + cellular proteinSide 1 = ADP + phosphate + cellular proteinSide 2.. Functionally, part of the Sec protein translocase complex. Interacts with the SecYEG preprotein conducting channel. Has a central role in coupling the hydrolysis of ATP to the transfer of proteins into and across the cell membrane, serving as an ATP-driven molecular motor driving the stepwise translocation of polypeptide chains across the membrane. In Helicobacter acinonychis (strain Sheeba), this protein is Protein translocase subunit SecA.